The chain runs to 523 residues: 2-isopropylmalate synthase (523 aa).

One can recognise a Pyruvate carboxyltransferase domain in the interval 5–267 (VIIFDTTLRD…HTNINHHEIW (263 aa)). Residues Asp14, His202, His204, and Asn238 each contribute to the Mn(2+) site. Residues 392 to 523 (RLDYFSVQSG…QNKENNKETV (132 aa)) are regulatory domain.

Belongs to the alpha-IPM synthase/homocitrate synthase family. LeuA type 1 subfamily. As to quaternary structure, homodimer. The cofactor is Mn(2+).

The protein localises to the cytoplasm. It carries out the reaction 3-methyl-2-oxobutanoate + acetyl-CoA + H2O = (2S)-2-isopropylmalate + CoA + H(+). Its pathway is amino-acid biosynthesis; L-leucine biosynthesis; L-leucine from 3-methyl-2-oxobutanoate: step 1/4. Functionally, catalyzes the condensation of the acetyl group of acetyl-CoA with 3-methyl-2-oxobutanoate (2-ketoisovalerate) to form 3-carboxy-3-hydroxy-4-methylpentanoate (2-isopropylmalate). The chain is 2-isopropylmalate synthase from Salmonella dublin (strain CT_02021853).